We begin with the raw amino-acid sequence, 360 residues long: Putative transport protein BU123 (360 aa).

The next 9 helical transmembrane spans lie at 18–38, 39–59, 66–86, 161–181, 204–224, 230–250, 251–271, 280–300, and 316–336; these read IFIVSMGVISFLVIHPFILGF, FWASMIVIATWPLMLKIQKIL, AVIIMIIILLLLFIIPVFFLV, GLFIVHSILMLFFSALLYWNG, LLLATQAVRAVALGVAVTALI, GIGLLVSGVPYWALLMIIIFF, SCLIQLGPLPILIPSIIWLYW, ILLIWSCFVFILDHILRPFFI, and IGGLLTFGMIGLFIGPVVLVI.

This sequence belongs to the autoinducer-2 exporter (AI-2E) (TC 2.A.86) family.

The protein resides in the cell membrane. This is Putative transport protein BU123 from Buchnera aphidicola subsp. Acyrthosiphon pisum (strain APS) (Acyrthosiphon pisum symbiotic bacterium).